Consider the following 238-residue polypeptide: Uridylate kinase (238 aa).

12-15 (KLSG) serves as a coordination point for ATP. Residue Gly54 participates in UMP binding. Gly55 and Arg59 together coordinate ATP. UMP contacts are provided by residues Asp74 and 135–142 (VGAPYFTT). Residues Thr162, Tyr168, and Asp171 each contribute to the ATP site.

This sequence belongs to the UMP kinase family. Homohexamer.

The protein resides in the cytoplasm. The catalysed reaction is UMP + ATP = UDP + ADP. The protein operates within pyrimidine metabolism; CTP biosynthesis via de novo pathway; UDP from UMP (UMPK route): step 1/1. Inhibited by UTP. In terms of biological role, catalyzes the reversible phosphorylation of UMP to UDP. The chain is Uridylate kinase from Erythrobacter litoralis (strain HTCC2594).